The following is a 394-amino-acid chain: Elongation factor Tu 1 (394 aa).

Positions 10 to 204 constitute a tr-type G domain; that stretch reads KPHVNVGTIG…ALDSYIPEPQ (195 aa). A G1 region spans residues 19–26; the sequence is GHVDHGKT. A GTP-binding site is contributed by 19 to 26; that stretch reads GHVDHGKT. T26 is a binding site for Mg(2+). Residues 60-64 form a G2 region; it reads GITIN. The tract at residues 81–84 is G3; the sequence is DCPG. GTP is bound by residues 81–85 and 136–139; these read DCPGH and NKCD. Residues 136–139 are G4; it reads NKCD. The G5 stretch occupies residues 174–176; that stretch reads SAL.

Belongs to the TRAFAC class translation factor GTPase superfamily. Classic translation factor GTPase family. EF-Tu/EF-1A subfamily. In terms of assembly, monomer.

It is found in the cytoplasm. It catalyses the reaction GTP + H2O = GDP + phosphate + H(+). Functionally, GTP hydrolase that promotes the GTP-dependent binding of aminoacyl-tRNA to the A-site of ribosomes during protein biosynthesis. This Shewanella baltica (strain OS195) protein is Elongation factor Tu 1.